The sequence spans 228 residues: Aquaporin Z (228 aa).

5 consecutive transmembrane segments (helical) span residues Met1–Gly21, Thr46–Val66, Ile82–Ile102, Met129–Gly149, and Leu154–Val174. The NPA 1 signature appears at Asn63 to Ala65. Residues Asn184–Ala186 carry the NPA 2 motif. Residues Leu205–Leu225 form a helical membrane-spanning segment.

It belongs to the MIP/aquaporin (TC 1.A.8) family. As to quaternary structure, homotetramer.

It is found in the cell inner membrane. The catalysed reaction is H2O(in) = H2O(out). In terms of biological role, channel that permits osmotically driven movement of water in both directions. It is involved in the osmoregulation and in the maintenance of cell turgor during volume expansion in rapidly growing cells. It mediates rapid entry or exit of water in response to abrupt changes in osmolarity. The sequence is that of Aquaporin Z from Brucella suis biovar 1 (strain 1330).